Consider the following 221-residue polypeptide: Uracil-DNA glycosylase 1 (221 aa).

The active-site Proton acceptor is the aspartate 61.

This sequence belongs to the uracil-DNA glycosylase (UDG) superfamily. UNG family.

The protein resides in the cytoplasm. The enzyme catalyses Hydrolyzes single-stranded DNA or mismatched double-stranded DNA and polynucleotides, releasing free uracil.. Excises uracil residues from the DNA which can arise as a result of misincorporation of dUMP residues by DNA polymerase or due to deamination of cytosine. The chain is Uracil-DNA glycosylase 1 from Listeria innocua serovar 6a (strain ATCC BAA-680 / CLIP 11262).